We begin with the raw amino-acid sequence, 292 residues long: Peroxidase 2 (292 aa).

Cystine bridges form between C7-C86, C40-C45, C92-C288, and C171-C199. H38 acts as the Proton acceptor in catalysis. The Ca(2+) site is built by D39, V42, G44, D46, and S48. A glycan (N-linked (GlcNAc...) asparagine) is linked at N68. P134 contacts substrate. N-linked (GlcNAc...) asparagine glycosylation occurs at N139. Residue H164 coordinates heme b. T165 is a Ca(2+) binding site. N179 carries an N-linked (GlcNAc...) asparagine glycan. Positions 210, 213, and 218 each coordinate Ca(2+).

Belongs to the peroxidase family. Classical plant (class III) peroxidase subfamily. The cofactor is Ca(2+). Requires heme b as cofactor.

It carries out the reaction 2 a phenolic donor + H2O2 = 2 a phenolic radical donor + 2 H2O. Functionally, removal of H(2)O(2), oxidation of toxic reductants, biosynthesis and degradation of lignin, suberization, auxin catabolism, response to environmental stresses such as wounding, pathogen attack and oxidative stress. These functions might be dependent on each isozyme/isoform in each plant tissue. In Cucumis sativus (Cucumber), this protein is Peroxidase 2.